We begin with the raw amino-acid sequence, 510 residues long: GMP synthase [glutamine-hydrolyzing] (510 aa).

The 192-residue stretch at 3 to 194 folds into the Glutamine amidotransferase type-1 domain; it reads QILILDFGSQ…ARVICGYKEK (192 aa). The active-site Nucleophile is cysteine 80. Catalysis depends on residues histidine 168 and glutamate 170. The region spanning 195 to 385 is the GMPS ATP-PPase domain; that stretch reads WTPASIMTAS…LGLGSEIVDI (191 aa). 222–228 contacts ATP; sequence SGGVDSS.

In terms of assembly, homodimer.

It carries out the reaction XMP + L-glutamine + ATP + H2O = GMP + L-glutamate + AMP + diphosphate + 2 H(+). The protein operates within purine metabolism; GMP biosynthesis; GMP from XMP (L-Gln route): step 1/1. Its function is as follows. Catalyzes the synthesis of GMP from XMP. The chain is GMP synthase [glutamine-hydrolyzing] from Elusimicrobium minutum (strain Pei191).